Reading from the N-terminus, the 322-residue chain is Arginase (322 aa).

Mn(2+) is bound by residues His-113, Asp-141, His-143, and Asp-145. Substrate is bound by residues 143-147 (HADIN), 154-156 (SGN), and Asp-200. Asp-247 and Asp-249 together coordinate Mn(2+). Residues Thr-261 and Glu-292 each coordinate substrate.

The protein belongs to the arginase family. Homotrimer. Requires Mn(2+) as cofactor.

The enzyme catalyses L-arginine + H2O = urea + L-ornithine. The protein operates within nitrogen metabolism; urea cycle; L-ornithine and urea from L-arginine: step 1/1. In Coccidioides posadasii (strain C735) (Valley fever fungus), this protein is Arginase (ARG).